The primary structure comprises 245 residues: Ribonuclease 3 (245 aa).

Positions 24–146 (YAVFLQKLGY…IIGAIYLESG (123 aa)) constitute an RNase III domain. E59 contributes to the Mg(2+) binding site. D63 is an active-site residue. Residues N132 and E135 each coordinate Mg(2+). The active site involves E135. A DRBM domain is found at 173-243 (DSKTLLQEYL…ARQAYELAIV (71 aa)).

Belongs to the ribonuclease III family. As to quaternary structure, homodimer. Requires Mg(2+) as cofactor.

The protein localises to the cytoplasm. It catalyses the reaction Endonucleolytic cleavage to 5'-phosphomonoester.. Its function is as follows. Digests double-stranded RNA. Involved in the processing of primary rRNA transcript to yield the immediate precursors to the large and small rRNAs (23S and 16S). Processes some mRNAs, and tRNAs when they are encoded in the rRNA operon. Processes pre-crRNA and tracrRNA of type II CRISPR loci if present in the organism. The protein is Ribonuclease 3 of Nitrosomonas europaea (strain ATCC 19718 / CIP 103999 / KCTC 2705 / NBRC 14298).